Consider the following 686-residue polypeptide: Polyribonucleotide nucleotidyltransferase (686 aa).

Residues Asp478 and Asp484 each coordinate Mg(2+). Residues 545–604 (PRVEVIQIPTDKIGLLIGPGGKTINALQDEYGVNISVENDGTVYVAGVEGMSVKAAVSAI) enclose the KH domain. The S1 motif domain maps to 614–684 (GDIYVGKVVK…KQNRISLEMV (71 aa)).

It belongs to the polyribonucleotide nucleotidyltransferase family. The cofactor is Mg(2+).

It localises to the cytoplasm. The enzyme catalyses RNA(n+1) + phosphate = RNA(n) + a ribonucleoside 5'-diphosphate. Its function is as follows. Involved in mRNA degradation. Catalyzes the phosphorolysis of single-stranded polyribonucleotides processively in the 3'- to 5'-direction. In Rubrobacter xylanophilus (strain DSM 9941 / JCM 11954 / NBRC 16129 / PRD-1), this protein is Polyribonucleotide nucleotidyltransferase.